A 949-amino-acid polypeptide reads, in one-letter code: Protein translocase subunit SecA 1 (949 aa).

Residues Gln86, 104–108 (GEGKT), and Asp493 each bind ATP. Positions 869-949 (VDGGARERAP…AKPPKSVKKR (81 aa)) are disordered. Positions 925–934 (SRRERREAAR) are enriched in basic and acidic residues.

It belongs to the SecA family. As to quaternary structure, monomer and homodimer. Part of the essential Sec protein translocation apparatus which comprises SecA, SecYEG and auxiliary proteins SecDF. Other proteins may also be involved.

It localises to the cell membrane. Its subcellular location is the cytoplasm. The catalysed reaction is ATP + H2O + cellular proteinSide 1 = ADP + phosphate + cellular proteinSide 2.. In terms of biological role, part of the Sec protein translocase complex. Interacts with the SecYEG preprotein conducting channel. Has a central role in coupling the hydrolysis of ATP to the transfer of proteins into and across the cell membrane, serving as an ATP-driven molecular motor driving the stepwise translocation of polypeptide chains across the membrane. The polypeptide is Protein translocase subunit SecA 1 (Mycobacterium bovis (strain ATCC BAA-935 / AF2122/97)).